The sequence spans 223 residues: RNA-free ribonuclease P (223 aa).

The protein belongs to the HARP family.

It carries out the reaction Endonucleolytic cleavage of RNA, removing 5'-extranucleotides from tRNA precursor.. RNA-free RNase P that catalyzes the removal of the 5'-leader sequence from pre-tRNA to produce the mature 5'-terminus. The protein is RNA-free ribonuclease P of Methanococcus maripaludis (strain C6 / ATCC BAA-1332).